Here is a 581-residue protein sequence, read N- to C-terminus: A-type ATP synthase subunit A (581 aa).

ATP is bound at residue 232-239 (GPFGSGKT).

It belongs to the ATPase alpha/beta chains family. In terms of assembly, has multiple subunits with at least A(3), B(3), C, D, E, F, H, I and proteolipid K(x).

The protein resides in the cell membrane. It carries out the reaction ATP + H2O + 4 H(+)(in) = ADP + phosphate + 5 H(+)(out). Component of the A-type ATP synthase that produces ATP from ADP in the presence of a proton gradient across the membrane. The A chain is the catalytic subunit. The chain is A-type ATP synthase subunit A from Methanocorpusculum labreanum (strain ATCC 43576 / DSM 4855 / Z).